The primary structure comprises 346 residues: Elongation factor Ts (346 aa).

Positions 80-83 (TDFV) are involved in Mg(2+) ion dislocation from EF-Tu.

Belongs to the EF-Ts family.

Its subcellular location is the cytoplasm. Its function is as follows. Associates with the EF-Tu.GDP complex and induces the exchange of GDP to GTP. It remains bound to the aminoacyl-tRNA.EF-Tu.GTP complex up to the GTP hydrolysis stage on the ribosome. The protein is Elongation factor Ts of Streptococcus pyogenes serotype M18 (strain MGAS8232).